We begin with the raw amino-acid sequence, 1071 residues long: ATP-dependent helicase/deoxyribonuclease subunit B (1071 aa).

Belongs to the helicase family. AddB/RexB type 2 subfamily. Heterodimer of AddA and RexB. It depends on Mg(2+) as a cofactor.

Functionally, the heterodimer acts as both an ATP-dependent DNA helicase and an ATP-dependent, dual-direction single-stranded exonuclease. Recognizes the chi site generating a DNA molecule suitable for the initiation of homologous recombination. This subunit has 5' -&gt; 3' nuclease activity but not helicase activity. This is ATP-dependent helicase/deoxyribonuclease subunit B from Streptococcus pyogenes serotype M12 (strain MGAS9429).